We begin with the raw amino-acid sequence, 217 residues long: Casparian strip membrane protein 6 (217 aa).

Residues 1–57 (MEEAKHIEAVEAKQIEAEEAQRIKAGEAKQIEAGETSRSSRKVITFEPKLVINKGIS) are Cytoplasmic-facing. The helical transmembrane segment at 58–78 (VLGFVLRLFAVFGTIGSALAM) threads the bilayer. Topologically, residues 79–103 (GTTHESVVSLSQLVLLKVKYSDLPT) are extracellular. Residues 104–124 (LMFFVVANAIAGGYLVLSLPV) traverse the membrane as a helical segment. The Cytoplasmic segment spans residues 125–138 (SIFHIFSTKAKTSR). Residues 139–159 (IILLVIDTVMLALVSSGASAA) traverse the membrane as a helical segment. Topologically, residues 160–191 (TATVYLAHEGNTTANWPPICQQFDGFCERISG) are extracellular. N-linked (GlcNAc...) asparagine glycosylation is present at Asn170. The chain crosses the membrane as a helical span at residues 192–212 (SLIGSFCAVILLMLIVINSAI). Residues 213–217 (SLSRH) are Cytoplasmic-facing.

It belongs to the Casparian strip membrane proteins (CASP) family. Homodimer and heterodimers.

Its subcellular location is the cell membrane. In terms of biological role, regulates membrane-cell wall junctions and localized cell wall deposition. Required for establishment of the Casparian strip membrane domain (CSD) and the subsequent formation of Casparian strips, a cell wall modification of the root endodermis that determines an apoplastic barrier between the intraorganismal apoplasm and the extraorganismal apoplasm and prevents lateral diffusion. This chain is Casparian strip membrane protein 6, found in Arabidopsis lyrata subsp. lyrata (Lyre-leaved rock-cress).